The following is a 224-amino-acid chain: BOS complex subunit TMEM147 (224 aa).

Residues 1–21 (MTLFHFGNCFALAYFPYFITY) form a helical membrane-spanning segment. At 22-34 (KCSGLSEYNAFWK) the chain is on the cytoplasmic side. A helical transmembrane segment spans residues 35–58 (CVQAGVTYLFVQLCKMLFLATFFP). The Lumenal portion of the chain corresponds to 59–66 (TWEGGIYD). The helical transmembrane segment at 67–88 (FIGEFMKASVDVADLIGLNLVM) threads the bilayer. Residues 89 to 98 (SRNAGKGEYK) are Cytoplasmic-facing. A helical membrane pass occupies residues 99–124 (IMVAALGWATAELIMSRCIPLWVGAR). Topologically, residues 125 to 129 (GIEFD) are lumenal. Residues 130 to 155 (WKYIQMSIDSNISLVHYIVASAQVWM) traverse the membrane as a helical segment. The Cytoplasmic portion of the chain corresponds to 156-164 (ITRYDLYHT). Residues 165-187 (FRPAVLLLMFLSVYKAFVMETFV) form a helical membrane-spanning segment. At 188–194 (HLCSLGS) the chain is on the lumenal side. Residues 195–216 (WAALLARAVVTGLLALSTLALY) traverse the membrane as a helical segment. The Cytoplasmic portion of the chain corresponds to 217-224 (VAVVNVHS).

The protein belongs to the TMEM147 family. As to quaternary structure, component of the back of Sec61 (BOS) complex, composed of NCLN/Nicalin, NOMO (NOMO1, NOMO2 or NOMO3) and TMEM147. The BOS complex is part of the multi-pass translocon (MPT) complex, composed of three subcomplexes, the GEL complex (composed of RAB5IF/OPTI and TMCO1), the BOS complex (composed of NCLN/Nicalin, NOMO and TMEM147) and the PAT complex (composed of WDR83OS/Asterix and CCDC47). The MPT complex associates with the SEC61 complex. Interacts with CHRM3, CHRM1 and AVPR2. Interacts with LBR; promoting LBR localization to the nucleus inner membrane. Interacts with DHCR7.

It is found in the endoplasmic reticulum membrane. The protein resides in the nucleus membrane. The protein localises to the cell membrane. Functionally, component of the multi-pass translocon (MPT) complex that mediates insertion of multi-pass membrane proteins into the lipid bilayer of membranes. The MPT complex takes over after the SEC61 complex: following membrane insertion of the first few transmembrane segments of proteins by the SEC61 complex, the MPT complex occludes the lateral gate of the SEC61 complex to promote insertion of subsequent transmembrane regions. Also acts as a negative regulator of CHRM3 function, most likely by interfering with its trafficking to the cell membrane. Negatively regulates CHRM3-mediated calcium mobilization and activation of RPS6KA1/p90RSK activity. Regulates LBR localization to the nucleus inner membrane. The sequence is that of BOS complex subunit TMEM147 from Homo sapiens (Human).